The sequence spans 112 residues: Large ribosomal subunit protein P1w (112 aa).

Residues 85-112 are disordered; it reads AAAPAAEEKKKDEPAEESDGDLGFGLFD. At Ser-102 the chain carries Phosphoserine.

Belongs to the eukaryotic ribosomal protein P1/P2 family. In terms of assembly, P1 and P2 exist as dimers at the large ribosomal subunit.

Functionally, plays an important role in the elongation step of protein synthesis. This chain is Large ribosomal subunit protein P1w (RPP1A), found in Arabidopsis thaliana (Mouse-ear cress).